Here is a 311-residue protein sequence, read N- to C-terminus: Ribonuclease Z (311 aa).

Residues His-61, His-63, Asp-65, His-66, His-137, Asp-207, and His-263 each coordinate Zn(2+). Asp-65 (proton acceptor) is an active-site residue.

Belongs to the RNase Z family. Homodimer. It depends on Zn(2+) as a cofactor.

It catalyses the reaction Endonucleolytic cleavage of RNA, removing extra 3' nucleotides from tRNA precursor, generating 3' termini of tRNAs. A 3'-hydroxy group is left at the tRNA terminus and a 5'-phosphoryl group is left at the trailer molecule.. In terms of biological role, zinc phosphodiesterase, which displays some tRNA 3'-processing endonuclease activity. Probably involved in tRNA maturation, by removing a 3'-trailer from precursor tRNA. This is Ribonuclease Z from Thermococcus onnurineus (strain NA1).